We begin with the raw amino-acid sequence, 208 residues long: Small ribosomal subunit protein uS9c (208 aa).

The transit peptide at 1–51 directs the protein to the chloroplast; it reads MAVSISSLTSSFASLSFTSNLTPKPQTLPMARTKPFSLSNPAVVKPLVITA. The residue at position 52 (T52) is an N-acetylthreonine. The tract at residues 185-208 is disordered; that stretch reads DSRIVERKKPGLKKARKAPQFSKR. The segment covering 194 to 208 has biased composition (basic residues); the sequence is PGLKKARKAPQFSKR.

Component of the chloroplast small ribosomal subunit (SSU). Mature 70S chloroplast ribosomes of higher plants consist of a small (30S) and a large (50S) subunit. The 30S small subunit contains 1 molecule of ribosomal RNA (16S rRNA) and 24 different proteins. The 50S large subunit contains 3 rRNA molecules (23S, 5S and 4.5S rRNA) and 33 different proteins. uS9c binds directly to 16S ribosomal RNA. uS9c interacts with translation factor pY (PSRP1).

It is found in the plastid. It localises to the chloroplast. Its function is as follows. Component of the chloroplast ribosome (chloro-ribosome), a dedicated translation machinery responsible for the synthesis of chloroplast genome-encoded proteins, including proteins of the transcription and translation machinery and components of the photosynthetic apparatus. The protein is Small ribosomal subunit protein uS9c (PRPS9) of Spinacia oleracea (Spinach).